A 326-amino-acid polypeptide reads, in one-letter code: (+)-T-muurolol synthase ((2E,6E)-farnesyl diphosphate cyclizing) (326 aa).

The Mg(2+) site is built by aspartate 81 and aspartate 85. Residues 81–85 (DDQCD) carry the DDXXD motif motif. Position 175 (arginine 175) interacts with substrate. The Mg(2+) site is built by asparagine 221 and serine 225. Residue lysine 228 participates in substrate binding. A Mg(2+)-binding site is contributed by glutamate 229. 309 to 310 (RY) contributes to the substrate binding site.

Belongs to the terpene synthase family. Mg(2+) is required as a cofactor.

The enzyme catalyses (2E,6E)-farnesyl diphosphate + H2O = (+)-T-muurolol + diphosphate. It functions in the pathway secondary metabolite biosynthesis; terpenoid biosynthesis. In terms of biological role, catalyzes the conversion of (2E,6E)-farnesyl diphosphate (FPP) into (+)-T-muurolol via a 1,10-cyclization, which requires isomerization of FPP to nerolidyl diphosphate (NPP) and then abstraction of the pyrophosphate from intermediate NPP leading to a (E,Z)-germacradienyl (helminthogermacradienyl) cation. The protein is (+)-T-muurolol synthase ((2E,6E)-farnesyl diphosphate cyclizing) of Roseiflexus castenholzii (strain DSM 13941 / HLO8).